The sequence spans 657 residues: MTLTACEVTAAEAPFDRVSKTIPHPLSWGAALWSVVSVRWATVALLLFLAGLVAQLNGAPEAMWWTLYLACYLAGGWGSAWAGAQALRNKALDVDLLMIAAAVGAVAIGQIFDGALLIVIFATSGALDDIATRHTAESVKGLLDLAPDQAVVVQGDGSERVVAASELVVGDRVVVRPGDRIPADGAVLSGASDVDQRSITGESMPVAKARGDEVFAGTVNGSGVLHLVVTRDPSQTVVARIVELVADASATKAKTQLFIEKIEQRYSLGMVAATLALIVIPLMFGADLRPVLLRAMTFMIVASPCAVVLATMPPLLSAIANAGRHGVLVKSAVVVERLADTSIVALDKTGTLTRGIPRLASVAPLDPNVVDARRLLQLAAAAEQSSEHPLGRAIVAEARRRGIAIPPAKDFRAVPGCGVHALVGNDFVEIASPQSYRGAPLAELAPLLSAGATAAIVLLDGVAIGVLGLTDQLRPDAVESVAAMAALTAAPPVLLTGDNGRAAWRVARNAGITDVRAALLPEQKVEVVRNLQAGGHQVLLVGDGVNDAPAMAAARAAVAMGAGADLTLQTADGVTIRDELHTIPTIIGLARQARRVVTVNLAIAATFIAVLVLWDLFGQLPLPLGVVGHEGSTVLVALNGMRLLTNRSWRAAASAAR.

The next 5 membrane-spanning stretches (helical) occupy residues 40–60 (WATV…NGAP), 62–82 (AMWW…SAWA), 101–121 (AAVG…IVIF), 268–288 (LGMV…GADL), and 299–319 (MIVA…LSAI). The 4-aspartylphosphate intermediate role is filled by aspartate 347. The Mg(2+) site is built by aspartate 543 and aspartate 547. A helical membrane pass occupies residues 596-618 (VVTVNLAIAATFIAVLVLWDLFG).

This sequence belongs to the cation transport ATPase (P-type) (TC 3.A.3) family. Type IB subfamily.

The protein resides in the cell membrane. Its function is as follows. Involved in heavy metal homeostasis. Probably exports nickel and cobalt ions out of the cell. This Mycobacterium bovis (strain ATCC BAA-935 / AF2122/97) protein is Probable cobalt/nickel-exporting P-type ATPase (ctpD).